Here is a 359-residue protein sequence, read N- to C-terminus: MRGTDEKYGLPPQPDSDRMTRRTLPVLGLAHELITPTLRQMADRLDPHMRPVVSYHLGWSDERGRPVNNNCGKAIRPALVFVAAEAAGADPHSAIPGAVSVELVHNFSLVHDDLMDRDEHRRHRPTVWALWGDAMALLAGDAMLSLAHEVLLDCDSPHVGAALRAISEATRELIRGQAADTAFESRTDVALDECLKMAEGKTAALMAASAEVGALLAGAPRSVREALVAYGRHIGLAFQLVDDLLGIWGRPEITGKPVYSDLRSRKKTLPVTWTVAHGGSAGRRLAAWLVDETGSQTASDDELAAVAELIECGGGRRWASAEARRHVTQGIDMVARIGIPDRPAAELQDLAHYIVDRQA.

The interval 1–21 (MRGTDEKYGLPPQPDSDRMTR) is disordered. 3 residues coordinate isopentenyl diphosphate: Lys-73, Arg-76, and His-105. Mg(2+) is bound by residues Asp-112 and Asp-116. Positions 112 to 116 (DDLMD) match the DDXXD motif motif. Residue Arg-121 coordinates (2E)-geranyl diphosphate. Residue Arg-122 coordinates isopentenyl diphosphate. Residues Lys-201, Thr-202, and Gln-239 each coordinate (2E)-geranyl diphosphate. A DDXXD motif motif is present at residues 242–246 (DDLLG). Lys-256 and Lys-266 together coordinate (2E)-geranyl diphosphate.

The protein belongs to the FPP/GGPP synthase family. It depends on Mg(2+) as a cofactor.

It localises to the cytoplasm. The catalysed reaction is isopentenyl diphosphate + (2E)-geranyl diphosphate = (2E,6E)-farnesyl diphosphate + diphosphate. It participates in isoprenoid biosynthesis; farnesyl diphosphate biosynthesis; farnesyl diphosphate from geranyl diphosphate and isopentenyl diphosphate. Its function is as follows. Catalyzes the condensation of isopentenyl pyrophosphate (IPP) with geranyl diphosphate (GPP) to yield (2E,6E)-farnesyl diphosphate (E,E-FPP). May be used for squalene and possibly sterol biosynthesis. The sequence is that of (2E,6E)-farnesyl diphosphate synthase from Mycobacterium bovis (strain ATCC BAA-935 / AF2122/97).